The following is a 254-amino-acid chain: Probable septum site-determining protein MinC (254 aa).

The protein belongs to the MinC family. In terms of assembly, interacts with MinD and FtsZ.

In terms of biological role, cell division inhibitor that blocks the formation of polar Z ring septums. Rapidly oscillates between the poles of the cell to destabilize FtsZ filaments that have formed before they mature into polar Z rings. Prevents FtsZ polymerization. This Burkholderia ambifaria (strain ATCC BAA-244 / DSM 16087 / CCUG 44356 / LMG 19182 / AMMD) (Burkholderia cepacia (strain AMMD)) protein is Probable septum site-determining protein MinC.